A 602-amino-acid polypeptide reads, in one-letter code: MSRRSLSLWFPLLLLLLLPPTPSVLLADPGVPSPVNPCCYYPCQNQGVCVRFGLDNYQCDCTRTGYSGPNCTIPEIWTWLRNSLRPSPSFTHFLLTHGYWLWEFVNATFIREVLMRLVLTVRSNLIPSPPTYNSAHDYISWESFSNVSYYTRILPSVPKDCPTPMGTKGKKQLPDVQLLAQQLLLRREFIPAPQGTNILFAFFAQHFTHQFFKTSGKMGPGFTKALGHGVDLGHIYGDNLERQYHLRLFKDGKLKYQVLDGEVYPPSVEQASVLMRYPPGVPPERQMAVGQEVFGLLPGLMLFSTIWLREHNRVCDLLKEEHPTWDDEQLFQTTRLILIGETIKIVIEEYVQHLSGYFLQLKFDPELLFRAQFQYRNRIAMEFNHLYHWHPLMPNSFQVGSQEYSYEQFLFNTSMLVDYGVEALVDAFSRQRAGRIGGGRNFDYHVLHVAVDVIKESREMRLQPFNEYRKRFGLKPYTSFQELTGEKEMAAELEELYGDIDALEFYPGLLLEKCQPNSIFGESMIEMGAPFSLKGLLGNPICSPEYWKPSTFGGDVGFNLVNTASLKKLVCLNTKTCPYVSFRVPDYPGDDGSVLVRRSTEL.

The N-terminal stretch at 1 to 26 (MSRRSLSLWFPLLLLLLLPPTPSVLL) is a signal peptide. Residues 34-72 (PVNPCCYYPCQNQGVCVRFGLDNYQCDCTRTGYSGPNCT) enclose the EGF-like domain. Disulfide bonds link C38–C49, C39–C161, C43–C59, and C61–C71. N-linked (GlcNAc...) asparagine glycosylation is found at N70, N106, and N146. H209 functions as the Proton acceptor in the catalytic mechanism. The For cyclooxygenase activity role is filled by Y387. Residue H390 participates in heme b binding. Cysteines 571 and 577 form a disulfide.

It belongs to the prostaglandin G/H synthase family. As to quaternary structure, homodimer. Requires heme b as cofactor.

It localises to the microsome membrane. Its subcellular location is the endoplasmic reticulum membrane. The enzyme catalyses (5Z,8Z,11Z,14Z)-eicosatetraenoate + AH2 + 2 O2 = prostaglandin H2 + A + H2O. The catalysed reaction is (5Z,8Z,11Z,14Z)-eicosatetraenoate + 2 O2 = prostaglandin G2. It catalyses the reaction prostaglandin G2 + AH2 = prostaglandin H2 + A + H2O. It carries out the reaction (9Z,12Z)-octadecadienoate + AH2 + O2 = (9R)-hydroxy-(10E,12Z)-octadecadienoate + A + H2O. The enzyme catalyses (9Z,12Z)-octadecadienoate + AH2 + O2 = (9S)-hydroxy-(10E,12Z)-octadecadienoate + A + H2O. The catalysed reaction is (9Z,12Z)-octadecadienoate + AH2 + O2 = (13S)-hydroxy-(9Z,11E)-octadecadienoate + A + H2O. It catalyses the reaction (9Z,12Z)-octadecadienoate + AH2 + O2 = (13R)-hydroxy-(9Z,11E)-octadecadienoate + A + H2O. It functions in the pathway lipid metabolism; prostaglandin biosynthesis. With respect to regulation, the cyclooxygenase activity is inhibited by nonsteroidal anti-inflammatory drugs (NSAIDs) including ibuprofen, flurbiprofen, ketoprofen, naproxen, flurbiprofen, anirolac, fenclofenac and diclofenac. Functionally, dual cyclooxygenase and peroxidase that plays an important role in the biosynthesis pathway of prostanoids, a class of C20 oxylipins mainly derived from arachidonate ((5Z,8Z,11Z,14Z)-eicosatetraenoate, AA, C20:4(n-6)), with a particular role in the inflammatory response. The cyclooxygenase activity oxygenates AA to the hydroperoxy endoperoxide prostaglandin G2 (PGG2), and the peroxidase activity reduces PGG2 to the hydroxy endoperoxide prostaglandin H2 (PGH2), the precursor of all 2-series prostaglandins and thromboxanes. This complex transformation is initiated by abstraction of hydrogen at carbon 13 (with S-stereochemistry), followed by insertion of molecular O2 to form the endoperoxide bridge between carbon 9 and 11 that defines prostaglandins. The insertion of a second molecule of O2 (bis-oxygenase activity) yields a hydroperoxy group in PGG2 that is then reduced to PGH2 by two electrons. Involved in the constitutive production of prostanoids in particular in the stomach and platelets. In gastric epithelial cells, it is a key step in the generation of prostaglandins, such as prostaglandin E2 (PGE2), which plays an important role in cytoprotection. In platelets, it is involved in the generation of thromboxane A2 (TXA2), which promotes platelet activation and aggregation, vasoconstriction and proliferation of vascular smooth muscle cells. Can also use linoleate (LA, (9Z,12Z)-octadecadienoate, C18:2(n-6)) as substrate and produce hydroxyoctadecadienoates (HODEs) in a regio- and stereospecific manner, being (9R)-HODE ((9R)-hydroxy-(10E,12Z)-octadecadienoate) and (13S)-HODE ((13S)-hydroxy-(9Z,11E)-octadecadienoate) its major products. This Mus musculus (Mouse) protein is Prostaglandin G/H synthase 1.